The primary structure comprises 333 residues: Adenosine deaminase (333 aa).

Zn(2+) is bound by residues His12 and His14. Substrate is bound by residues His14, Asp16, and Gly170. His197 provides a ligand contact to Zn(2+). Glu200 (proton donor) is an active-site residue. Asp278 is a binding site for Zn(2+). Asp279 contacts substrate.

It belongs to the metallo-dependent hydrolases superfamily. Adenosine and AMP deaminases family. Adenosine deaminase subfamily. Zn(2+) is required as a cofactor.

The enzyme catalyses adenosine + H2O + H(+) = inosine + NH4(+). It carries out the reaction 2'-deoxyadenosine + H2O + H(+) = 2'-deoxyinosine + NH4(+). Functionally, catalyzes the hydrolytic deamination of adenosine and 2-deoxyadenosine. In Aliivibrio fischeri (strain MJ11) (Vibrio fischeri), this protein is Adenosine deaminase.